The sequence spans 1744 residues: MRDPDKVKSGPICDTVAVIVLEESDDENALPDVLHEVQSPHTSDNIPTSSIKKFARPRGWYNQSVSSPSEFFYQILTTERGTRRIAYVLSTWEEDEKTLNFKAVSIVLISQNFHPKAFKEILLEISNDLRTPEFSSSSELIRFLTYELVEEGSTIEIRTKTLHVELGFELIPISPVTGKDVAMLFKMLGFQNVIKIIHALLSDCRIVLASSSLMRLSRCQNAILSLLYPFEYVHSCVTILPDSLAEVLESPTPFLIGVLSEFVTSFGDENIVVYLDNGEVHVPDHAEIYKSDDYYYNSLHQRLRDVMFTTTSQEDLSIPNEERIEVDDFILDKKLRACFIYYFAELLYGYQYYILYTRIKGNFEKKLTTSLTFHVGAFRGFRKLTDMMSSSLLKSVYFQTFILTRALPRRKHDLFDEISCFKELDQLIFKQNSTSSESKKIIEHISCELIQKERYMEKCSARKQEIFTKIHWISGKELAQNNNSIIHTVKPKMRSNVILQAMLPVVNTHAEYHANQFEAYAHRIEALRNCLAAIFEGKVAFASKSLDAVKSSMRFAPLRIELCRLLNQKCSHDKLTDKQFEDIALLMNAALQAECEEDKDGVVRSLMYLSNVYSRKVAQGMQQYMYTAVQEHKVWKNQRFWTSCFYYEVHEMLFSEMLQKDRKITESLWCHTLRPCAMEMINTDDTDQEELVKQENEMIQAQAKHFANILISLQIPLSEEFFEHEDAHRSVLNEKCKWIVNTLDSILGVTGRINGLSLSRIQTYVEAHVESLRDVYVEMSTGEHLKKGNFDPVLAHGEFLISDPIDCYLLTSIEESEMSLNRLENLLPADGSLFLTNYRVIFKGKSVDINATNGTIVQTIPLYSMESFKKLTNKKLIPTQLIEKGVKIEHIISIRSSCASSIIIAFDEDEINNMAIEKFLEVIETNSHNSFAFYNTRKDMKVVENGSHKFGTLNSAIRGFTKKKTDTRRIRSHSSHRGSIQLSFDKMEELDYLKKNAHIRYAVIDYPRIGLNSKIVKLRMSHSNLDYTICPSYPGNFIVPSETNESELAKVAKGFVEHRLPVVVWMNENGALLVRASAFTSIDMVKKLKKVVNYRRNASKLTGSMTGSQQTLHSKASSNEESSSNIVAGAEIKSAEVQMNYIAKLSNSSQRAVSYALPTQYADKFSTFNDGCTLTQNNANGFPTTRIHRKALYVLLEKGHGVKIPIDSNAEAIMVRSVKESELRRSLQRARQICSSEFQVENRTSFLESWNASNWPQCVSRMIELSNSIVALMNLYNSSVAICLEAGRSITTILSSLSQLLSDPYYRTCDGFQVLVEKEWLAFGHYFHKDTETSSPSFICFLDCVYQISQQYPTAFEFSYFYISFLAYHSTAGYFRTFIDDCEEKRLQSDANEFYLPDNLATINVWEFIKLRNRVSAAFYNELYEQIGDIVIPSSSIPQIHMWPFLAETHLKYGSPYDIEPASHEQQLVDPDYEEEEDWSKLNNTDIDERHLNRRVRSPERDPANMDMIRLLQKSYLTELFDASDRKTTTNGESNGKETIHELTPFTVGARPVQCCYCTNILTRWSKAVHCKKCRIHVHEGCVNRNITIGNITHTWDAKPFEDIKMPSGAIQIGTPQAEKMLHSPNNTLTRESMSPPTANTIPPLCTGYLSKRGAKLKLWVPRFFVLYPDSPKVYYYEDFENWKTAEKPSGCIDLVDFKSFNLEQTGRRGLIELHMKNKTHRLLSENINEAIRWKECIEQVIRD.

One can recognise a uDENN domain in the interval 14 to 150; the sequence is DTVAVIVLEE…IRFLTYELVE (137 aa). One can recognise a cDENN domain in the interval 165-304; that stretch reads ELGFELIPIS…YYNSLHQRLR (140 aa). A dDENN domain is found at 306-412; that stretch reads VMFTTTSQED…LTRALPRRKH (107 aa). The GRAM domain occupies 787-871; it reads KGNFDPVLAH…LYSMESFKKL (85 aa). A Myotubularin phosphatase domain is found at 996-1447; sequence NAHIRYAVID…PQIHMWPFLA (452 aa). Over residues 1102 to 1116 the composition is skewed to polar residues; that stretch reads TGSMTGSQQTLHSKA. The disordered stretch occupies residues 1102 to 1123; that stretch reads TGSMTGSQQTLHSKASSNEESS. A Phorbol-ester/DAG-type zinc finger spans residues 1540-1590; that stretch reads IHELTPFTVGARPVQCCYCTNILTRWSKAVHCKKCRIHVHEGCVNRNITIG. The region spanning 1643–1743 is the PH domain; that stretch reads PPLCTGYLSK…WKECIEQVIR (101 aa).

The protein belongs to the protein-tyrosine phosphatase family. Non-receptor class myotubularin subfamily.

Its function is as follows. Probably acts as an adapter for other myotubularin-like phosphatases. The sequence is that of Myotubularin-related protein 5 from Caenorhabditis elegans.